The sequence spans 1166 residues: Pesticidal crystal protein Cry1Ga (1166 aa).

This sequence belongs to the delta endotoxin family.

Functionally, promotes colloidosmotic lysis by binding to the midgut epithelial cells of insects. This is Pesticidal crystal protein Cry1Ga (cry1Ga) from Bacillus thuringiensis.